We begin with the raw amino-acid sequence, 518 residues long: Nitrogenase iron-iron protein alpha chain (518 aa).

[8Fe-7S] cluster-binding residues include cysteine 49, cysteine 75, and cysteine 138. Positions 257 and 423 each coordinate [8Fe-9S-C-homocitryl] cluster.

The protein belongs to the NifD/NifK/NifE/NifN family. Hexamer of two alpha, two beta, and two delta chains. The cofactor is [8Fe-7S] cluster. Requires [8Fe-9S-C-homocitryl] cluster as cofactor.

It catalyses the reaction N2 + 8 reduced [2Fe-2S]-[ferredoxin] + 16 ATP + 16 H2O = H2 + 8 oxidized [2Fe-2S]-[ferredoxin] + 2 NH4(+) + 16 ADP + 16 phosphate + 6 H(+). In terms of biological role, this iron-iron protein is part of the nitrogenase complex that catalyzes the key enzymatic reactions in nitrogen fixation. Other nitrogenase complexes utilize a molybdenum-iron protein or a vanadium-iron protein. The protein is Nitrogenase iron-iron protein alpha chain (anfD) of Azotobacter vinelandii.